Consider the following 1004-residue polypeptide: Glutamate [NMDA] receptor subunit 1 (1004 aa).

The first 39 residues, 1-39, serve as a signal peptide directing secretion; that stretch reads MAGTDSPAAARFVYRCLLFAPAIVVGLLLPLTLPPIAAA. The Extracellular segment spans residues 40 to 585; the sequence is QRHTASDNPS…TLVSFLQPFS (546 aa). Asn270, Asn326, Asn357, Asn409, Asn466, Asn493, and Asn513 each carry an N-linked (GlcNAc...) asparagine glycan. Residues 542–544 and Arg549 contribute to the glycine site; that span reads PLT. The helical transmembrane segment at 586-606 threads the bilayer; it reads NTLWILVMVSVHVVALVLYLL. The Cytoplasmic segment spans residues 607–663; sequence DRFSPFGRFKLSHSDSNEEKALNLSSAVWFAWGVLLNSGIGEGTPRSFSARVLGMVW. Residues 664–684 form a helical membrane-spanning segment; sequence AGFAMIIVASYTANLAAFLVL. The Extracellular segment spans residues 685 to 843; the sequence is ERPKTKLSGI…KTPNTLGLKN (159 aa). Asn705 carries an N-linked (GlcNAc...) asparagine glycan. 2 residues coordinate glycine: Ser715 and Asp759. A helical transmembrane segment spans residues 844-864; sequence MAGVFILVGVGIAGGVGLIII. Over 865-1004 the chain is Cytoplasmic; it reads EVIYKKHQVK…YTSDVSHLVV (140 aa). Residues 980-1004 are disordered; it reads TRPQQNILPPRYSPGYTSDVSHLVV. The segment covering 994–1004 has biased composition (polar residues); it reads GYTSDVSHLVV.

The protein belongs to the glutamate-gated ion channel (TC 1.A.10.1) family. As to quaternary structure, forms a heteromeric NMDA channel with Nmdar2.

Its subcellular location is the cell membrane. It localises to the postsynaptic cell membrane. The protein resides in the postsynaptic density. In terms of biological role, NMDA receptor subtype of glutamate-gated ion channels with high calcium permeability and voltage-dependent sensitivity to magnesium. Mediated by glycine. This protein plays a key role in synaptic plasticity, synaptogenesis, excitotoxicity, memory acquisition and learning. It mediates neuronal functions in glutamate neurotransmission. Is involved in the cell surface targeting of NMDA receptors. Plays a role in associative learning and in long-term memory consolidation. The polypeptide is Glutamate [NMDA] receptor subunit 1 (Drosophila pseudoobscura pseudoobscura (Fruit fly)).